The following is a 145-amino-acid chain: Mediator of RNA polymerase II transcription subunit 21 (145 aa).

Residues 79–112 adopt a coiled-coil conformation; the sequence is EESTAALQAASLRQLEEENQEAAARLEEVVYRGD.

It belongs to the Mediator complex subunit 21 family. As to quaternary structure, component of the Mediator complex.

It localises to the nucleus. In terms of biological role, component of the Mediator complex, a coactivator involved in the regulated transcription of nearly all RNA polymerase II-dependent genes. Mediator functions as a bridge to convey information from gene-specific regulatory proteins to the basal RNA polymerase II transcription machinery. Mediator is recruited to promoters by direct interactions with regulatory proteins and serves as a scaffold for the assembly of a functional preinitiation complex with RNA polymerase II and the general transcription factors. The protein is Mediator of RNA polymerase II transcription subunit 21 (med21) of Danio rerio (Zebrafish).